Here is a 151-residue protein sequence, read N- to C-terminus: MAGKETRLEKMLAPVVESLGCEFWGLELRMQGKQSLLRIFIEKEAGVGVEDCENVSRQVSAVLDVEDPISGEYTLEVSSPGMDRPLFTLDHFTRFVGEHVSLRLRTAFDGRRNFSGKLTAVEDDEVILLIDAEEYILPFELIDKAQVVPKF.

It belongs to the RimP family.

It localises to the cytoplasm. Functionally, required for maturation of 30S ribosomal subunits. The sequence is that of Ribosome maturation factor RimP from Saccharophagus degradans (strain 2-40 / ATCC 43961 / DSM 17024).